A 481-amino-acid polypeptide reads, in one-letter code: MAIVNQPRTLAEKVWSDHVVVAGTGEGAAREPDLIYIDLHLVHEVTSPQAFDGLRLAGRPVRRPDLTIATEDHNVPTVDIDKPIADPVSRTQVETLRRNCAEFGIRLHPMGDVEQGIVHIIGPQLGLTQPGMTVVCGDSHTSTHGAFGALAMGIGTSEVEHVLATQTLPLRPFKTMAVNVDGQLPPGVSAKDIILAVIAKIGTGGGQGHVIEYRGSAIESLSMEGRMTVCNMSIEAGARAGMIAPDETTFEFLRGRPHAPKGAEWDAAVAVWRQLRTDEGAQFDTEIYIDASTLSPFVTWGTNPGQGVPLSDPVPDPELMFDEAERQAAEKALAYMDLRAGTPMRQIPVDTVFVGSCTNGRIEDLRVVADILRGRRVADNVRMLVVPGSMRVRAQAESEGLGEIFTAAGAEWRQAGCSMCLGMNPDQLAPGERCASTSNRNFEGRQGKGGRTHLVSPAVAAATAVRGTLSSPADLAAEPTH.

3 residues coordinate [4Fe-4S] cluster: C357, C417, and C420.

It belongs to the aconitase/IPM isomerase family. LeuC type 1 subfamily. Heterodimer of LeuC and LeuD. [4Fe-4S] cluster is required as a cofactor.

It catalyses the reaction (2R,3S)-3-isopropylmalate = (2S)-2-isopropylmalate. The protein operates within amino-acid biosynthesis; L-leucine biosynthesis; L-leucine from 3-methyl-2-oxobutanoate: step 2/4. In terms of biological role, catalyzes the isomerization between 2-isopropylmalate and 3-isopropylmalate, via the formation of 2-isopropylmaleate. The sequence is that of 3-isopropylmalate dehydratase large subunit from Mycolicibacterium vanbaalenii (strain DSM 7251 / JCM 13017 / BCRC 16820 / KCTC 9966 / NRRL B-24157 / PYR-1) (Mycobacterium vanbaalenii).